A 537-amino-acid chain; its full sequence is CTP synthase (537 aa).

The segment at 1-268 is amidoligase domain; it reads MNTKYIFVTG…DNLVCKKLKL (268 aa). CTP is bound at residue Ser-14. Ser-14 is a UTP binding site. An ATP-binding site is contributed by 15–20; sequence SLGKGI. Tyr-55 contributes to the L-glutamine binding site. An ATP-binding site is contributed by Asp-72. The Mg(2+) site is built by Asp-72 and Glu-142. Residues 149 to 151, 189 to 194, and Lys-225 contribute to the CTP site; these read DIE and KTKPTQ. Residues 189–194 and Lys-225 each bind UTP; that span reads KTKPTQ. Residues 293-535 form the Glutamine amidotransferase type-1 domain; sequence NIALVGKYVE…IKASLNSKHK (243 aa). Gly-355 lines the L-glutamine pocket. Catalysis depends on Cys-382, which acts as the Nucleophile; for glutamine hydrolysis. L-glutamine is bound by residues 383–386, Glu-406, and Arg-463; that span reads LGMQ. Active-site residues include His-508 and Glu-510.

It belongs to the CTP synthase family. In terms of assembly, homotetramer.

The catalysed reaction is UTP + L-glutamine + ATP + H2O = CTP + L-glutamate + ADP + phosphate + 2 H(+). It carries out the reaction L-glutamine + H2O = L-glutamate + NH4(+). It catalyses the reaction UTP + NH4(+) + ATP = CTP + ADP + phosphate + 2 H(+). Its pathway is pyrimidine metabolism; CTP biosynthesis via de novo pathway; CTP from UDP: step 2/2. Allosterically activated by GTP, when glutamine is the substrate; GTP has no effect on the reaction when ammonia is the substrate. The allosteric effector GTP functions by stabilizing the protein conformation that binds the tetrahedral intermediate(s) formed during glutamine hydrolysis. Inhibited by the product CTP, via allosteric rather than competitive inhibition. Functionally, catalyzes the ATP-dependent amination of UTP to CTP with either L-glutamine or ammonia as the source of nitrogen. Regulates intracellular CTP levels through interactions with the four ribonucleotide triphosphates. The polypeptide is CTP synthase (Clostridium kluyveri (strain ATCC 8527 / DSM 555 / NBRC 12016 / NCIMB 10680 / K1)).